We begin with the raw amino-acid sequence, 223 residues long: Ribonuclease T (223 aa).

Positions 20–194 (VVIDVETAGF…YDTERTAELF (175 aa)) constitute an Exonuclease domain. Mg(2+) contacts are provided by Asp23, Glu25, His181, and Asp186. Catalysis depends on His181, which acts as the Proton donor/acceptor.

Belongs to the RNase T family. As to quaternary structure, homodimer. It depends on Mg(2+) as a cofactor.

Trims short 3' overhangs of a variety of RNA species, leaving a one or two nucleotide 3' overhang. Responsible for the end-turnover of tRNA: specifically removes the terminal AMP residue from uncharged tRNA (tRNA-C-C-A). Also appears to be involved in tRNA biosynthesis. The protein is Ribonuclease T of Shewanella sp. (strain W3-18-1).